The sequence spans 208 residues: Putative dioxygenase RC0543 (208 aa).

Belongs to the intradiol ring-cleavage dioxygenase family.

This chain is Putative dioxygenase RC0543, found in Rickettsia conorii (strain ATCC VR-613 / Malish 7).